Reading from the N-terminus, the 47-residue chain is Delta-halcutoxin-Hcg1a (47 aa).

3 disulfides stabilise this stretch: cysteine 3/cysteine 43, cysteine 5/cysteine 33, and cysteine 26/cysteine 44.

The protein belongs to the sea anemone sodium channel inhibitory toxin family. Type II subfamily.

Its subcellular location is the secreted. It is found in the nematocyst. Functionally, is potently lethal to crabs, although it showed neither lethal activity in mice nor hemolytic activity. May bind to voltage-gated sodium channels (Nav), thereby delaying their inactivation during signal transduction. In Isohalcurias carlgreni (Sea anemone), this protein is Delta-halcutoxin-Hcg1a.